A 287-amino-acid polypeptide reads, in one-letter code: Mu-like prophage FluMu DNA transposition protein B (287 aa).

Residues 7 to 62 (LKQHLSDSQITQAQLAREAGVNAGALSAYLNDNYKGNIADVEAKLAAYLEKKAVQA) form the HTH cro/C1-type domain. The H-T-H motif DNA-binding region spans 18 to 37 (QAQLAREAGVNAGALSAYLN). 98–105 (GMSGVGKT) lines the ATP pocket.

Its function is as follows. This protein is a non-specific DNA-binding and ATP-hydrolyzing protein essential for bacteriophage integration and replication. The polypeptide is Mu-like prophage FluMu DNA transposition protein B (Haemophilus influenzae (strain ATCC 51907 / DSM 11121 / KW20 / Rd)).